The following is a 125-amino-acid chain: Small ribosomal subunit protein bS6 (125 aa).

Residues P99–Q125 are disordered. A compositionally biased stretch (basic and acidic residues) spans S105–S115. Positions T116–Q125 are enriched in polar residues.

Belongs to the bacterial ribosomal protein bS6 family.

Functionally, binds together with bS18 to 16S ribosomal RNA. In Bordetella petrii (strain ATCC BAA-461 / DSM 12804 / CCUG 43448), this protein is Small ribosomal subunit protein bS6.